Consider the following 2839-residue polypeptide: Bifunctional DNA-directed RNA polymerase subunit beta-beta' (2839 aa).

A DNA-directed RNA polymerase subunit beta region spans residues 1–1433; sequence MVDSSYMCAS…CLNVALKQNN (1433 aa). A DNA-directed RNA polymerase subunit beta' region spans residues 1436 to 2839; the sequence is IEDISHTNIA…KESVAESRYN (1404 aa). Zn(2+)-binding residues include Cys-1501, Cys-1503, Cys-1516, and Cys-1519. Mg(2+) is bound by residues Asp-1893, Asp-1895, and Asp-1897. Zn(2+) is bound by residues Cys-2238, Cys-2312, Cys-2319, and Cys-2322.

This sequence in the N-terminal section; belongs to the RNA polymerase beta chain family. The protein in the C-terminal section; belongs to the RNA polymerase beta' chain family. As to quaternary structure, the RNAP catalytic core consists of 2 alpha, 1 beta/beta' and 1 omega subunit. When a sigma factor is associated with the core the holoenzyme is formed, which can initiate transcription. Mg(2+) serves as cofactor. It depends on Zn(2+) as a cofactor.

It carries out the reaction RNA(n) + a ribonucleoside 5'-triphosphate = RNA(n+1) + diphosphate. DNA-dependent RNA polymerase catalyzes the transcription of DNA into RNA using the four ribonucleoside triphosphates as substrates. The protein is Bifunctional DNA-directed RNA polymerase subunit beta-beta' (rpoBC) of Wolbachia sp. subsp. Brugia malayi (strain TRS).